Reading from the N-terminus, the 236-residue chain is Small ribosomal subunit protein uS5 (236 aa).

In terms of domain architecture, S5 DRBM spans 61–124; sequence ENQEVLDIAL…NYAKLNIIEI (64 aa).

It belongs to the universal ribosomal protein uS5 family. As to quaternary structure, part of the 30S ribosomal subunit. Contacts protein S4.

In terms of biological role, with S4 and S12 plays an important role in translational accuracy. The sequence is that of Small ribosomal subunit protein uS5 from Pyrococcus furiosus (strain ATCC 43587 / DSM 3638 / JCM 8422 / Vc1).